A 79-amino-acid chain; its full sequence is MGGFTSIWHWVIVLLVIVLLFGAKKIPELAKGLGSGIKNFKKAVKDDEEEAKNEPKTLDAQVAQTKVHETSEIKSKQES.

Residues 1–21 (MGGFTSIWHWVIVLLVIVLLF) form a helical membrane-spanning segment. Residues 48-79 (EEEAKNEPKTLDAQVAQTKVHETSEIKSKQES) form a disordered region. Residues 66 to 79 (KVHETSEIKSKQES) show a composition bias toward basic and acidic residues.

The protein belongs to the TatA/E family. In terms of assembly, the Tat system comprises two distinct complexes: a TatABC complex, containing multiple copies of TatA, TatB and TatC subunits, and a separate TatA complex, containing only TatA subunits. Substrates initially bind to the TatABC complex, which probably triggers association of the separate TatA complex to form the active translocon.

The protein localises to the cell inner membrane. Part of the twin-arginine translocation (Tat) system that transports large folded proteins containing a characteristic twin-arginine motif in their signal peptide across membranes. TatA could form the protein-conducting channel of the Tat system. The protein is Sec-independent protein translocase protein TatA of Helicobacter pylori (strain Shi470).